Consider the following 717-residue polypeptide: Cleavage stimulation factor subunit 3 (717 aa).

Ser2 carries the post-translational modification N-acetylserine. HAT repeat units lie at residues 45–77 (QPIDKARKTYERLVAQFPSSGRFWKLYIEAEIK), 79–110 (KNYDKVEKLFQRCLMKVLHIDLWKCYLSYVRE), 117–152 (SYKEKMAQAYDFALDKIGMEIMSYQIWVDYINFLKG), 163–196 (QRITAVRRVYQRGCVNPMINIEQLWRDYNKYEEG), 221–261 (KEYE…WEKS), 271–303 (LITKRVMFAYEQCLLVLGHHPDIWYEAAQYLEQ), 319–352 (LFSDEAANIYERAISTLLKKNMLLYFAYADYEES), 354–387 (MKYEKVHSIYNRLLAIEDIDPTLVYIQYMKFARR), and 458–494 (NEDNNTRVLFERVLTSGSLPPEKSGEIWARFLAFESN). A disordered region spans residues 683-704 (AVKRPNEDSDEDEEKGAVVPPV). Phosphoserine is present on Ser691.

In terms of assembly, homodimer. The CSTF complex is composed of CSTF1 (50 kDa subunit), CSTF2 (64 kDa subunit) and CSTF3 (77 kDa subunit). CSTF3 directly interacts with CSTF1 and CSTF2. Interacts with FIP1L1.

The protein resides in the nucleus. Its function is as follows. One of the multiple factors required for polyadenylation and 3'-end cleavage of mammalian pre-mRNAs. The chain is Cleavage stimulation factor subunit 3 (Cstf3) from Mus musculus (Mouse).